A 474-amino-acid chain; its full sequence is Bifunctional protein HldE (474 aa).

Positions 1 to 318 (MKVTLPDFNK…ENAIRGRADN (318 aa)) are ribokinase. Residue 195-198 (NMSE) coordinates ATP. D264 is an active-site residue. A cytidylyltransferase region spans residues 344–474 (MTNGCFDILH…TNIINAIKKK (131 aa)).

It in the N-terminal section; belongs to the carbohydrate kinase PfkB family. The protein in the C-terminal section; belongs to the cytidylyltransferase family. As to quaternary structure, homodimer.

It carries out the reaction D-glycero-beta-D-manno-heptose 7-phosphate + ATP = D-glycero-beta-D-manno-heptose 1,7-bisphosphate + ADP + H(+). The catalysed reaction is D-glycero-beta-D-manno-heptose 1-phosphate + ATP + H(+) = ADP-D-glycero-beta-D-manno-heptose + diphosphate. It functions in the pathway nucleotide-sugar biosynthesis; ADP-L-glycero-beta-D-manno-heptose biosynthesis; ADP-L-glycero-beta-D-manno-heptose from D-glycero-beta-D-manno-heptose 7-phosphate: step 1/4. The protein operates within nucleotide-sugar biosynthesis; ADP-L-glycero-beta-D-manno-heptose biosynthesis; ADP-L-glycero-beta-D-manno-heptose from D-glycero-beta-D-manno-heptose 7-phosphate: step 3/4. Its function is as follows. Catalyzes the phosphorylation of D-glycero-D-manno-heptose 7-phosphate at the C-1 position to selectively form D-glycero-beta-D-manno-heptose-1,7-bisphosphate. In terms of biological role, catalyzes the ADP transfer from ATP to D-glycero-beta-D-manno-heptose 1-phosphate, yielding ADP-D-glycero-beta-D-manno-heptose. This is Bifunctional protein HldE from Proteus mirabilis (strain HI4320).